Consider the following 843-residue polypeptide: Axin-2 (843 aa).

The segment at Met-1–Leu-75 is disordered. A Tankyrase-binding motif motif is present at residues Ala-21 to Glu-30. A compositionally biased stretch (basic and acidic residues) spans Arg-56 to Ala-69. Residues Ser-81–Val-200 form the RGS domain. Residues Val-327–Ser-413 are interaction with GSK3B. The tract at residues Gln-334 to Glu-393 is interaction with SIAH1 and SIAH2. Disordered stretches follow at residues Gln-396–Pro-435, Leu-447–Pro-494, Ala-561–Pro-674, and Ala-718–Lys-748. The segment at Ser-413–Gln-476 is interaction with beta-catenin. Composition is skewed to low complexity over residues Tyr-477–Pro-494 and Pro-588–Gly-597. The span at Ser-727–Ser-741 shows a compositional bias: polar residues. Positions Ala-761 to Asp-843 constitute a DIX domain.

As to quaternary structure, interacts with glycogen synthase kinase-3 beta (GSK3B) and beta-catenin. The interaction between axin and beta-catenin occurs via the armadillo repeats contained in beta-catenin. Interacts with SMAD7 and RNF111. Interacts with ANKRD6. Interacts with SIAH1. Interacts with SIAH2. In terms of processing, probably phosphorylated by GSK3B and dephosphorylated by PP2A. Post-translationally, ADP-ribosylated by tankyrase TNKS and TNKS2. Poly-ADP-ribosylated protein is recognized by RNF146, followed by ubiquitination and subsequent activation of the Wnt signaling pathway. Ubiquitinated by RNF146 when poly-ADP-ribosylated, leading to its degradation and subsequent activation of the Wnt signaling pathway. Deubiquitinated by USP34, deubiquitinated downstream of beta-catenin stabilization step: deubiquitination is important Wnt signaling to positively regulate beta-catenin (CTNBB1)-mediated transcription. Expressed in brain and lymphoblast.

Its subcellular location is the cytoplasm. Functionally, inhibitor of the Wnt signaling pathway. Down-regulates beta-catenin. Probably facilitate the phosphorylation of beta-catenin and APC by GSK3B. The chain is Axin-2 (AXIN2) from Homo sapiens (Human).